A 97-amino-acid polypeptide reads, in one-letter code: Co-chaperonin GroES (97 aa).

This sequence belongs to the GroES chaperonin family. In terms of assembly, heptamer of 7 subunits arranged in a ring. Interacts with the chaperonin GroEL.

The protein resides in the cytoplasm. Functionally, together with the chaperonin GroEL, plays an essential role in assisting protein folding. The GroEL-GroES system forms a nano-cage that allows encapsulation of the non-native substrate proteins and provides a physical environment optimized to promote and accelerate protein folding. GroES binds to the apical surface of the GroEL ring, thereby capping the opening of the GroEL channel. The polypeptide is Co-chaperonin GroES (Ectopseudomonas mendocina (strain ymp) (Pseudomonas mendocina)).